Consider the following 380-residue polypeptide: Chaperone protein DnaJ (380 aa).

Residues 6 to 71 (DYYESLEVSR…QKRAAYDRYG (66 aa)) form the J domain. A CR-type zinc finger spans residues 136 to 215 (GVTKDVEVRT…CHGTGTEAKT (80 aa)). C149, C152, C167, C170, C189, C192, C203, and C206 together coordinate Zn(2+). CXXCXGXG motif repeat units follow at residues 149-156 (CEACHGSG), 167-174 (CPTCHGAG), 189-196 (CPTCHGSG), and 203-210 (CKVCHGTG).

This sequence belongs to the DnaJ family. In terms of assembly, homodimer. The cofactor is Zn(2+).

Its subcellular location is the cytoplasm. In terms of biological role, participates actively in the response to hyperosmotic and heat shock by preventing the aggregation of stress-denatured proteins and by disaggregating proteins, also in an autonomous, DnaK-independent fashion. Unfolded proteins bind initially to DnaJ; upon interaction with the DnaJ-bound protein, DnaK hydrolyzes its bound ATP, resulting in the formation of a stable complex. GrpE releases ADP from DnaK; ATP binding to DnaK triggers the release of the substrate protein, thus completing the reaction cycle. Several rounds of ATP-dependent interactions between DnaJ, DnaK and GrpE are required for fully efficient folding. Also involved, together with DnaK and GrpE, in the DNA replication of plasmids through activation of initiation proteins. This is Chaperone protein DnaJ from Gluconobacter oxydans (strain 621H) (Gluconobacter suboxydans).